An 867-amino-acid chain; its full sequence is Xylosyltransferase 2 (867 aa).

Residues methionine 1–lysine 15 are Cytoplasmic-facing. Residues leucine 16–serine 36 form a helical; Signal-anchor for type II membrane protein membrane-spanning segment. The Lumenal segment spans residues valine 37–arginine 867. Positions aspartate 41–asparagine 122 are disordered. Residues arginine 53–aspartate 65 show a composition bias toward basic and acidic residues. Over residues serine 73–arginine 82 the composition is skewed to basic residues. An N-linked (GlcNAc...) asparagine glycan is attached at asparagine 122. 2 disulfides stabilise this stretch: cysteine 161–cysteine 189 and cysteine 205–cysteine 447. UDP-alpha-D-xylose-binding positions include valine 238, aspartate 266, and threonine 295–tryptophan 297. The N-linked (GlcNAc...) asparagine glycan is linked to asparagine 326. Residues aspartate 399–tryptophan 400, serine 480, and arginine 503–lysine 504 each bind UDP-alpha-D-xylose. 2 cysteine pairs are disulfide-bonded: cysteine 580-cysteine 835 and cysteine 828-cysteine 841. Asparagine 685 carries N-linked (GlcNAc...) asparagine glycosylation.

Belongs to the glycosyltransferase 14 family. XylT subfamily. Monomer. The cofactor is Mg(2+). Requires Mn(2+) as cofactor. Contains disulfide bonds.

It is found in the golgi apparatus membrane. It localises to the secreted. The catalysed reaction is UDP-alpha-D-xylose + L-seryl-[protein] = 3-O-(beta-D-xylosyl)-L-seryl-[protein] + UDP + H(+). The protein operates within glycan metabolism; chondroitin sulfate biosynthesis. It participates in glycan metabolism; heparan sulfate biosynthesis. Its function is as follows. Catalyzes the first step in the biosynthesis of chondroitin sulfate, heparan sulfate and dermatan sulfate proteoglycans, such as DCN. Transfers D-xylose from UDP-D-xylose to specific serine residues of the core protein. This chain is Xylosyltransferase 2 (XYLT2), found in Bos taurus (Bovine).